Reading from the N-terminus, the 175-residue chain is Nucleoside-triphosphatase THEP1 (175 aa).

Residues 16–23 and 103–110 each bind ATP; these read GMPGVGKT and VAFIDEIG.

This sequence belongs to the THEP1 NTPase family.

The enzyme catalyses a ribonucleoside 5'-triphosphate + H2O = a ribonucleoside 5'-diphosphate + phosphate + H(+). Has nucleotide phosphatase activity towards ATP, GTP, CTP, TTP and UTP. May hydrolyze nucleoside diphosphates with lower efficiency. This Pyrobaculum calidifontis (strain DSM 21063 / JCM 11548 / VA1) protein is Nucleoside-triphosphatase THEP1.